The sequence spans 1049 residues: Dyslexia-associated protein KIAA0319-like protein (1049 aa).

Topologically, residues 1–29 are cytoplasmic; the sequence is MEKRLGVKPNPASWILSGYYWQTSAKWLR. The chain crosses the membrane as a helical span at residues 30–50; sequence SLYLFYTCFCFSVLWLSTDAS. Residues 49–127 enclose the MANSC domain; that stretch reads ASESRCQQGK…AFRTHSSNSM (79 aa). Residues 51 to 932 are Extracellular-facing; sequence ESRCQQGKTQ…DSNCEWSVLY (882 aa). Asparagine 247, asparagine 395, asparagine 472, asparagine 487, and asparagine 525 each carry an N-linked (GlcNAc...) asparagine glycan. PKD domains follow at residues 312–401, 409–498, 504–594, 600–688, and 694–785; these read SAGE…VKPE, IAIV…VNKA, VANA…VQPE, QADA…VKEE, and IAKI…VKPD. A helical membrane pass occupies residues 933–953; that stretch reads VIIATFVIVVALGILSWTVIC. The Cytoplasmic portion of the chain corresponds to 954–1049; sequence CCKRQKGKPK…KARSPREEIL (96 aa). Threonine 974 carries the post-translational modification Phosphothreonine. Residues serine 978, serine 1009, and serine 1031 each carry the phosphoserine modification. The interval 1022 to 1049 is disordered; that stretch reads GKLLHGQNGSVPNGQTPLKARSPREEIL. The span at 1028-1037 shows a compositional bias: polar residues; the sequence is QNGSVPNGQT. Threonine 1037 is modified (phosphothreonine).

Interacts with RTN4R. In terms of assembly, (Microbial infection) Interacts with AAV-2 VP1. Post-translationally, N-glycosylated. As to expression, expressed in cortical neurons in the brain cortex (at protein level).

It localises to the cytoplasmic granule membrane. The protein localises to the golgi apparatus membrane. Its subcellular location is the golgi apparatus. The protein resides in the trans-Golgi network membrane. It is found in the cell membrane. Possible role in axon guidance through interaction with RTN4R. In terms of biological role, (Microbial infection) Acts as a receptor for adeno-associated virus and is involved in adeno-associated virus infection through endocytosis system. The polypeptide is Dyslexia-associated protein KIAA0319-like protein (Homo sapiens (Human)).